The primary structure comprises 330 residues: MYFLNDLNFSRRDAGFKARKDALDIASDYENISVVNIPLWGGVVQRIISSVKLSTFLCGLENKDVLIFNFPMAKPFWHILSFFHRLLKFRIVPLIHDIDELRGGGGSDSVRLATCDMVISHNPQMTKYLSKYMSQDKIKDIKIFDYLVSSDVEHRDVTDKQRGVIYAGNLSRHKCSFIYTEGCDFTLFGVNYENKDNPKYLGSFDAQSPEKINLPGMQFGLIWDGDSVETCSGAFGDYLKFNNPHKTSLYLSMELPVFIWDKAALADFIVDNRIGYAVGSIKEMQEIVDSMTIETYKQISENTKIISQKIRTGSYFRDVLEEVIDDLKTR.

It is found in the cytoplasm. The protein operates within bacterial outer membrane biogenesis; lipopolysaccharide biosynthesis. In terms of biological role, involved in the transfer of galactofuranose (Galf) onto an alpha-D-gluco-configured acceptor substrate to form a beta-1,6-linkage. It uses n-octyl alpha-D-glucopyranoside as an acceptor substrate for the addition of galactofuranose from the donor substrate UDP-galactofuranose. It is not able to use beta-D-glucopyranoside isomers. The chain is Beta-1,6-galactofuranosyltransferase WbbI (wbbI) from Escherichia coli (strain K12).